A 119-amino-acid polypeptide reads, in one-letter code: Large ribosomal subunit protein bL20 (119 aa).

It belongs to the bacterial ribosomal protein bL20 family.

Its function is as follows. Binds directly to 23S ribosomal RNA and is necessary for the in vitro assembly process of the 50S ribosomal subunit. It is not involved in the protein synthesizing functions of that subunit. This chain is Large ribosomal subunit protein bL20, found in Bacillus velezensis (strain DSM 23117 / BGSC 10A6 / LMG 26770 / FZB42) (Bacillus amyloliquefaciens subsp. plantarum).